The primary structure comprises 116 residues: Prefoldin subunit beta (116 aa).

The protein belongs to the prefoldin subunit beta family. In terms of assembly, heterohexamer of two alpha and four beta subunits.

The protein resides in the cytoplasm. Its function is as follows. Molecular chaperone capable of stabilizing a range of proteins. Seems to fulfill an ATP-independent, HSP70-like function in archaeal de novo protein folding. This Archaeoglobus fulgidus (strain ATCC 49558 / DSM 4304 / JCM 9628 / NBRC 100126 / VC-16) protein is Prefoldin subunit beta (pfdB).